Here is a 131-residue protein sequence, read N- to C-terminus: Fumarate reductase subunit C (131 aa).

The next 3 helical transmembrane spans lie at 30-50, 58-78, and 109-129; these read EGTC…VFAL, AGFV…VTLI, and IVRG…AVAL.

The protein belongs to the FrdC family. Part of an enzyme complex containing four subunits: a flavoprotein (FrdA), an iron-sulfur protein (FrdB), and two hydrophobic anchor proteins (FrdC and FrdD).

It is found in the cell inner membrane. In terms of biological role, two distinct, membrane-bound, FAD-containing enzymes are responsible for the catalysis of fumarate and succinate interconversion; fumarate reductase is used in anaerobic growth, and succinate dehydrogenase is used in aerobic growth. Anchors the catalytic components of the fumarate reductase complex to the cell inner membrane, binds quinones. This is Fumarate reductase subunit C from Proteus vulgaris.